A 150-amino-acid polypeptide reads, in one-letter code: Large ribosomal subunit protein bL9 (150 aa).

It belongs to the bacterial ribosomal protein bL9 family.

In terms of biological role, binds to the 23S rRNA. The protein is Large ribosomal subunit protein bL9 of Streptococcus mutans serotype c (strain ATCC 700610 / UA159).